Here is a 314-residue protein sequence, read N- to C-terminus: tRNA pseudouridine synthase B (314 aa).

Position 43 (His43) interacts with substrate. Catalysis depends on Asp48, which acts as the Nucleophile. Tyr76, Tyr179, and Leu200 together coordinate substrate.

The protein belongs to the pseudouridine synthase TruB family. Type 1 subfamily.

The catalysed reaction is uridine(55) in tRNA = pseudouridine(55) in tRNA. Functionally, responsible for synthesis of pseudouridine from uracil-55 in the psi GC loop of transfer RNAs. This Shigella boydii serotype 4 (strain Sb227) protein is tRNA pseudouridine synthase B.